Consider the following 211-residue polypeptide: Peptidyl-prolyl cis-trans isomerase FKBP14 (211 aa).

The first 19 residues, 1-19, serve as a signal peptide directing secretion; the sequence is MRFFLWNAILALWVTVLSG. C38 and C96 are oxidised to a cystine. Residues 45–135 form the PPIase FKBP-type domain; it reads GDLMLVHYEG…IFNIDLLEIR (91 aa). In terms of domain architecture, EF-hand 1 spans 135 to 170; it reads RNGPRSHESFQEMDLNDDWRLSKHEVKVYLQKEFEK. Residues D148, N150, D152, R154, and E159 each coordinate Ca(2+). An N-linked (GlcNAc...) asparagine glycan is attached at N176. In terms of domain architecture, EF-hand 2 spans 179–211; it reads HHDALVEDIFDKEDEDKDGFISAREFTYVHDEL. Ca(2+) is bound by residues D192, D194, D196, and E203. The short motif at 208-211 is the Prevents secretion from ER element; the sequence is HDEL.

Monomer. Homodimer. Interacts with type III, type IV and type X collagens.

The protein localises to the endoplasmic reticulum lumen. The catalysed reaction is [protein]-peptidylproline (omega=180) = [protein]-peptidylproline (omega=0). Its activity is regulated as follows. Inhibited by tacrolimus/FK506. In terms of biological role, PPIase which accelerates the folding of proteins during protein synthesis. Has a preference for substrates containing 4-hydroxylproline modifications, including type III collagen. May also target type VI and type X collagens. This chain is Peptidyl-prolyl cis-trans isomerase FKBP14 (Fkbp14), found in Mus musculus (Mouse).